The sequence spans 411 residues: Arginine deiminase (411 aa).

The active-site Amidino-cysteine intermediate is cysteine 401.

Belongs to the arginine deiminase family. Post-translationally, glycosylated.

Its subcellular location is the cytoplasm. It catalyses the reaction L-arginine + H2O = L-citrulline + NH4(+). It functions in the pathway amino-acid degradation; L-arginine degradation via ADI pathway; carbamoyl phosphate from L-arginine: step 1/2. This is Arginine deiminase (arcA) from Streptococcus pyogenes serotype M1.